The primary structure comprises 244 residues: tRNA pseudouridine synthase A (244 aa).

The active-site Nucleophile is Asp52. Tyr110 serves as a coordination point for substrate.

Belongs to the tRNA pseudouridine synthase TruA family. As to quaternary structure, homodimer.

The enzyme catalyses uridine(38/39/40) in tRNA = pseudouridine(38/39/40) in tRNA. Formation of pseudouridine at positions 38, 39 and 40 in the anticodon stem and loop of transfer RNAs. The chain is tRNA pseudouridine synthase A from Acetivibrio thermocellus (strain ATCC 27405 / DSM 1237 / JCM 9322 / NBRC 103400 / NCIMB 10682 / NRRL B-4536 / VPI 7372) (Clostridium thermocellum).